The sequence spans 430 residues: UDP-N-acetylglucosamine 1-carboxyvinyltransferase (430 aa).

22 to 23 (KN) serves as a coordination point for phosphoenolpyruvate. Residue Arg-102 coordinates UDP-N-acetyl-alpha-D-glucosamine. Cys-126 serves as the catalytic Proton donor. Position 126 is a 2-(S-cysteinyl)pyruvic acid O-phosphothioketal (Cys-126). UDP-N-acetyl-alpha-D-glucosamine-binding positions include 131–135 (RPVDL), 172–175 (KVSV), Asp-317, and Ile-339.

This sequence belongs to the EPSP synthase family. MurA subfamily.

The protein resides in the cytoplasm. The catalysed reaction is phosphoenolpyruvate + UDP-N-acetyl-alpha-D-glucosamine = UDP-N-acetyl-3-O-(1-carboxyvinyl)-alpha-D-glucosamine + phosphate. It functions in the pathway cell wall biogenesis; peptidoglycan biosynthesis. Its function is as follows. Cell wall formation. Adds enolpyruvyl to UDP-N-acetylglucosamine. This chain is UDP-N-acetylglucosamine 1-carboxyvinyltransferase, found in Allorhizobium ampelinum (strain ATCC BAA-846 / DSM 112012 / S4) (Agrobacterium vitis (strain S4)).